The sequence spans 1046 residues: Piwi-like protein 2 (1046 aa).

The segment covering methionine 1–proline 12 has biased composition (pro residues). The disordered stretch occupies residues methionine 1–leucine 35. Positions tryptophan 19–aspartate 31 are enriched in polar residues. The 114-residue stretch at serine 462–glycine 575 folds into the PAZ domain. In terms of domain architecture, Piwi spans leucine 741 to histidine 1032. Active-site residues include aspartate 818, glutamate 856, aspartate 888, and histidine 1021.

This sequence belongs to the argonaute family. Piwi subfamily. In terms of assembly, component of the PET complex. The cofactor is Mg(2+). In terms of processing, methylated on arginine residues; required for the interaction with Tudor domain-containing protein and subsequent localization to the meiotic nuage, also named P granule. In terms of tissue distribution, detected in primordial germ cells (PGCs) from 3 dpf. In adult, it is found in both the female and male gonad. In the ovary, it is present in all stages of germ cell differentiation. In testis, it is present in mitotic and meiotic germ cells. No protein has been detected in the fully differentiated sperm cell.

It is found in the cytoplasm. The protein localises to the nucleus. Its function is as follows. Endoribonuclease that plays a central role during spermatogenesis by repressing transposable elements and preventing their mobilization, which is essential for the germline integrity. Plays an essential role in germ cell differentiation and meiosis, independently of the function in transposable elements repression. Acts via the piRNA metabolic process, which mediates the repression of transposable elements during meiosis by forming complexes composed of piRNAs and Piwi proteins and govern the methylation and subsequent repression of transposons. During piRNA biosynthesis, plays a key role in the piRNA amplification loop, also named ping-pong amplification cycle, by acting as a 'slicer-competent' piRNA endoribonuclease that cleaves primary piRNAs, which are then loaded onto 'slicer-incompetent' piwil4. Piwil2 slicing produces a pre-miRNA intermediate, which is then processed in mature piRNAs, and as well as a 16 nucleotide by-product that is degraded. Required for piwil4/miwi2 nuclear localization and association with secondary piRNAs antisense. Represses circadian rhythms by promoting the stability and activity of core clock components BMAL1 and CLOCK. This is Piwi-like protein 2 (piwil2) from Danio rerio (Zebrafish).